Consider the following 327-residue polypeptide: DNA-directed RNA polymerase subunit alpha (327 aa).

The alpha N-terminal domain (alpha-NTD) stretch occupies residues 1-233; that stretch reads MVREKVKVST…NLFIPFLHVE (233 aa). Residues 267–327 are alpha C-terminal domain (alpha-CTD); sequence LAFQYIFIDQ…KKILDILEKK (61 aa).

It belongs to the RNA polymerase alpha chain family. As to quaternary structure, in plastids the minimal PEP RNA polymerase catalytic core is composed of four subunits: alpha, beta, beta', and beta''. When a (nuclear-encoded) sigma factor is associated with the core the holoenzyme is formed, which can initiate transcription.

The protein localises to the plastid. It localises to the chloroplast. The catalysed reaction is RNA(n) + a ribonucleoside 5'-triphosphate = RNA(n+1) + diphosphate. Functionally, DNA-dependent RNA polymerase catalyzes the transcription of DNA into RNA using the four ribonucleoside triphosphates as substrates. The sequence is that of DNA-directed RNA polymerase subunit alpha from Lepidium virginicum (Virginia pepperweed).